A 429-amino-acid chain; its full sequence is Ribosomal RNA small subunit methyltransferase B (429 aa).

Residues 254–260 (CAAPGGK), Asp-277, Asp-303, and Asp-322 each bind S-adenosyl-L-methionine. Catalysis depends on Cys-375, which acts as the Nucleophile. The interval 397–419 (ALSETGTPDQPGQQNLPGGEEGD) is disordered. Residues 400-412 (ETGTPDQPGQQNL) show a composition bias toward polar residues.

The protein belongs to the class I-like SAM-binding methyltransferase superfamily. RsmB/NOP family.

The protein resides in the cytoplasm. The catalysed reaction is cytidine(967) in 16S rRNA + S-adenosyl-L-methionine = 5-methylcytidine(967) in 16S rRNA + S-adenosyl-L-homocysteine + H(+). Functionally, specifically methylates the cytosine at position 967 (m5C967) of 16S rRNA. This Salmonella agona (strain SL483) protein is Ribosomal RNA small subunit methyltransferase B.